The following is a 246-amino-acid chain: Probable phosphatase Ssed_2939 (246 aa).

Zn(2+) is bound by residues His-8, His-10, His-16, His-41, Glu-74, His-102, His-132, Asp-193, and His-195.

The protein belongs to the PHP family. Zn(2+) is required as a cofactor.

In Shewanella sediminis (strain HAW-EB3), this protein is Probable phosphatase Ssed_2939.